Reading from the N-terminus, the 1720-residue chain is DNA-directed RNA polymerase I subunit RPA1 (1720 aa).

The Zn(2+) site is built by cysteine 64, cysteine 67, cysteine 74, histidine 77, cysteine 104, and cysteine 107. The segment at 110 to 201 is clamp; the sequence is LTCPRAVIHL…IALFWKAHMN (92 aa). Cysteine 205 and cysteine 208 together coordinate Zn(2+). Serine 240 carries the phosphoserine modification. The interval 320–426 is clamp; it reads FTNGQTVNLQ…IRQILEKKEG (107 aa). A rudder region spans residues 403–416; the sequence is DSEMDKLMMDKYPG. Positions 424, 429, and 436 each coordinate DNA. Residues 468-542 are involved in RRN3 binding to Pol I complex; that stretch reads YPQPVTPWNV…QGTKIVCRHV (75 aa). Arginine 552 serves as a coordination point for RNA. Mg(2+) is bound by residues aspartate 588, aspartate 590, and aspartate 592. RNA is bound at residue aspartate 592. Residues 805 to 883 form a funnel region; the sequence is KPKADVKRQR…NEINKACMPF (79 aa). Residues 960 to 1001 are bridging helix; that stretch reads KPPEFFFHCMAGREGLVDTAVKTSRSGYLQRCIIKHLEGLVV. Residues 1060 to 1155 are mediates the interaction with TOP2A; it reads ADPKKALHHF…SLSVWRPDIY (96 aa). The interval 1207–1248 is trigger loop; that stretch reads PGEAVGLLAAQSIGEPSTQMTLNTFHFAGRGEMNVTLGIPRL. Residue arginine 1249 coordinates DNA. Residues 1365 to 1498 form a disordered region; that stretch reads RNVNTRRATQ…SQEPQGPEAM (134 aa). Basic and acidic residues predominate over residues 1373 to 1390; that stretch reads TQRDLDNAGELGRSRGEQ. Phosphoserine is present on serine 1386. Acidic residues-rich tracts occupy residues 1391–1412 and 1422–1446; these read EGDE…DADA and EEEV…EDMQ. Over residues 1447 to 1461 the composition is skewed to basic and acidic residues; the sequence is EERNPHREGARKTQE. Residues 1462–1474 are compositionally biased toward acidic residues; sequence QDEEVGLGTEEDP.

Belongs to the RNA polymerase beta' chain family. In terms of assembly, component of the RNA polymerase I (Pol I) complex consisting of 13 subunits: a ten-subunit catalytic core composed of POLR1A/RPA1, POLR1B/RPA2, POLR1C/RPAC1, POLR1D/RPAC2, POLR1H/RPA12, POLR2E/RPABC1, POLR2F/RPABC2, POLR2H/RPABC3, POLR2K/RPABC4 and POLR2L/RPABC5; a mobile stalk subunit POLR1F/RPA43 protruding from the core and additional subunits homologous to general transcription factors POLR1E/RPA49 and POLR1G/RPA34. Part of Pol I pre-initiation complex (PIC), in which Pol I core assembles with RRN3 and promoter-bound UTBF and SL1/TIF-IB complex. Interacts (via dock II domain) with TOP2A; this interaction may assist Pol I transcription initiation by releasing supercoils occurring during DNA unwinding. Interacts with CAVIN1; this interaction induces the dissociation of Pol I complex paused at rDNA terminator sequences. Interacts with MYO1C. Interacts with ERBB2. Interacts with DDX11. Interacts with RECQL5. Mg(2+) is required as a cofactor.

It localises to the nucleus. The protein resides in the nucleolus. Its subcellular location is the chromosome. It catalyses the reaction RNA(n) + a ribonucleoside 5'-triphosphate = RNA(n+1) + diphosphate. In terms of biological role, catalytic core component of RNA polymerase I (Pol I), a DNA-dependent RNA polymerase which synthesizes ribosomal RNA precursors using the four ribonucleoside triphosphates as substrates. Transcribes 47S pre-rRNAs from multicopy rRNA gene clusters, giving rise to 5.8S, 18S and 28S ribosomal RNAs. Pol I-mediated transcription cycle proceeds through transcription initiation, transcription elongation and transcription termination stages. During transcription initiation, Pol I pre-initiation complex (PIC) is recruited by the selectivity factor 1 (SL1/TIF-IB) complex bound to the core promoter that precedes an rDNA repeat unit. The PIC assembly bends the promoter favoring the formation of the transcription bubble and promoter escape. Once the polymerase has escaped from the promoter it enters the elongation phase during which RNA is actively polymerized, based on complementarity with the template DNA strand. Highly processive, assembles in structures referred to as 'Miller trees' where many elongating Pol I complexes queue and transcribe the same rDNA coding regions. At terminator sequences downstream of the rDNA gene, PTRF interacts with Pol I and halts Pol I transcription leading to the release of the RNA transcript and polymerase from the DNA. Forms Pol I active center together with the second largest subunit POLR1B/RPA2. Appends one nucleotide at a time to the 3' end of the nascent RNA, with POLR1A/RPA1 contributing a Mg(2+)-coordinating DxDGD motif, and POLR1B/RPA2 participating in the coordination of a second Mg(2+) ion and providing lysine residues believed to facilitate Watson-Crick base pairing between the incoming nucleotide and the template base. Typically, Mg(2+) ions direct a 5' nucleoside triphosphate to form a phosphodiester bond with the 3' hydroxyl of the preceding nucleotide of the nascent RNA, with the elimination of pyrophosphate. Has proofreading activity: Pauses and backtracks to allow the cleavage of a missincorporated nucleotide via POLR1H/RPA12. High Pol I processivity is associated with decreased transcription fidelity. This Homo sapiens (Human) protein is DNA-directed RNA polymerase I subunit RPA1.